Here is a 360-residue protein sequence, read N- to C-terminus: C-C chemokine receptor type 4 (360 aa).

The Extracellular segment spans residues 1 to 39 (MNPTDIADTTLDESIYSNYYLYESIPKPCTKEGIKAFGE). A helical membrane pass occupies residues 40–67 (LFLPPLYSLVFVFGLLGNSVVVLVLFKY). Topologically, residues 68–77 (KRLRSMTDVY) are cytoplasmic. A helical membrane pass occupies residues 78–98 (LLNLAISDLLFVFSLPFWGYY). Over 99–111 (AADQWVFGLGLCK) the chain is Extracellular. An intrachain disulfide couples C110 to C187. The helical transmembrane segment at 112–133 (MISWMYLVGFYSGIFFVMLMSI) threads the bilayer. The Cytoplasmic segment spans residues 134 to 150 (DRYLAIVHAVFSLRART). The chain crosses the membrane as a helical span at residues 151–175 (LTYGVITSLATWSVAVFASLPGFLF). Over 176–206 (STCYTERNHTYCKTKYSLNSTTWKVLSSLEI) the chain is Extracellular. 2 N-linked (GlcNAc...) asparagine glycosylation sites follow: N183 and N194. A helical transmembrane segment spans residues 207–226 (NILGLVIPLGIMLFCYSMII). The Cytoplasmic segment spans residues 227–242 (RTLQHCKNEKKNKAVK). The helical transmembrane segment at 243–267 (MIFAVVVLFLGFWTPYNIVLFLETL) threads the bilayer. The Extracellular portion of the chain corresponds to 268–284 (VELEVLQDCTFERYLDY). The helical transmembrane segment at 285–308 (AIQATETLAFVHCCLNPIIYFFLG) threads the bilayer. At 309–360 (EKFRKYILQLFKTCRGLFVLCQYCGLLQIYSADTPSSSYTQSTMDHDLHDAL) the chain is on the cytoplasmic side.

It belongs to the G-protein coupled receptor 1 family. In terms of processing, in natural killer cells, CCL22 binding induces phosphorylation on yet undefined Ser/Thr residues, most probably by beta-adrenergic receptor kinases 1 and 2. In terms of tissue distribution, predominantly expressed in the thymus, in peripheral blood leukocytes, including T-cells, mostly CD4+ cells, and basophils, and in platelets; at lower levels, in the spleen and in monocytes. Detected also in macrophages, IL-2-activated natural killer cells and skin-homing memory T-cells, mostly the ones expressing the cutaneous lymphocyte antigen (CLA). Expressed in brain microvascular and coronary artery endothelial cells.

Its subcellular location is the cell membrane. Its function is as follows. High affinity receptor for the C-C type chemokines CCL17/TARC, CCL22/MDC and CKLF isoform 1/CKLF1. The activity of this receptor is mediated by G(i) proteins which activate a phosphatidylinositol-calcium second messenger system. Can function as a chemoattractant homing receptor on circulating memory lymphocytes and as a coreceptor for some primary HIV-2 isolates. In the CNS, could mediate hippocampal-neuron survival. This is C-C chemokine receptor type 4 (CCR4) from Homo sapiens (Human).